A 1755-amino-acid chain; its full sequence is Transposon Ty1-PR1 Gag-Pol polyprotein (1755 aa).

Composition is skewed to polar residues over residues 1–23, 48–60, 71–93, and 127–152; these read MESQ…SVTS, TKAN…TPAS, SPQT…MMTQ, and QSQF…GNTF. Disordered regions lie at residues 1-93, 126-173, and 352-421; these read MESQ…MMTQ, PQSQ…RPPP, and GSRN…SKST. Low complexity predominate over residues 153–165; that stretch reads TDSSSADSDMTST. The tract at residues 299-401 is RNA-binding; that stretch reads NNGIHINNKV…NSKSKTARAH (103 aa). A compositionally biased stretch (low complexity) spans 402-418; it reads NVSTSNNSPSTDNDSIS. Ser-416 carries the post-translational modification Phosphoserine. The active-site For protease activity; shared with dimeric partner is Asp-461. Positions 583–640 are integrase-type zinc finger-like; sequence NVHTSESTRKYPYPFIHRMLAHANAQTIRYSLKNNTITYFNESDVDWSSAIDYQCPDC. The Integrase catalytic domain occupies 660 to 835; it reads NSYEPFQYLH…AGLDISTLLP (176 aa). Residues Asp-671 and Asp-736 each contribute to the Mg(2+) site. Disordered stretches follow at residues 956 to 1087, 1092 to 1111, and 1130 to 1187; these read SKAV…ETEK, RSPS…NIVP, and DLPL…DNET. Residues 960 to 969 are compositionally biased toward low complexity; that stretch reads SPTDSTPPST. A compositionally biased stretch (polar residues) spans 1005–1015; the sequence is STPQISNIEST. A compositionally biased stretch (basic and acidic residues) spans 1038-1053; sequence ESSHASKSKDFRHSDS. Polar residues-rich tracts occupy residues 1054–1082 and 1101–1111; these read YSEN…QISD and PENNSSHNIVP. The Bipartite nuclear localization signal motif lies at 1178–1212; that stretch reads KKRSLEDNETEIKVSRDTWNTKNMRSLEPPRSKKR. Residues 1338–1476 form the Reverse transcriptase Ty1/copia-type domain; sequence NNYYITQLDI…DILGLEIKYQ (139 aa). 6 residues coordinate Mg(2+): Asp-1346, Asp-1427, Asp-1428, Asp-1610, Glu-1652, and Asp-1685. One can recognise an RNase H Ty1/copia-type domain in the interval 1610-1752; the sequence is DASYGNQPYY…IKTFKLLTNK (143 aa).

In terms of assembly, the capsid protein forms a homotrimer, from which the VLPs are assembled. The protease is a homodimer, whose active site consists of two apposed aspartic acid residues. Post-translationally, initially, virus-like particles (VLPs) are composed of the structural unprocessed proteins Gag and Gag-Pol, and also contain the host initiator methionine tRNA (tRNA(i)-Met) which serves as a primer for minus-strand DNA synthesis, and a dimer of genomic Ty RNA. Processing of the polyproteins occurs within the particle and proceeds by an ordered pathway, called maturation. First, the protease (PR) is released by autocatalytic cleavage of the Gag-Pol polyprotein yielding capsid protein p45 and a Pol-p154 precursor protein. This cleavage is a prerequisite for subsequent processing of Pol-p154 at the remaining sites to release the mature structural and catalytic proteins. Maturation takes place prior to the RT reaction and is required to produce transposition-competent VLPs.

The protein resides in the cytoplasm. Its subcellular location is the nucleus. The catalysed reaction is DNA(n) + a 2'-deoxyribonucleoside 5'-triphosphate = DNA(n+1) + diphosphate. It catalyses the reaction Endonucleolytic cleavage to 5'-phosphomonoester.. In terms of biological role, capsid protein (CA) is the structural component of the virus-like particle (VLP), forming the shell that encapsulates the retrotransposons dimeric RNA genome. The particles are assembled from trimer-clustered units and there are holes in the capsid shells that allow for the diffusion of macromolecules. CA also has nucleocapsid-like chaperone activity, promoting primer tRNA(i)-Met annealing to the multipartite primer-binding site (PBS), dimerization of Ty1 RNA and initiation of reverse transcription. The aspartyl protease (PR) mediates the proteolytic cleavages of the Gag and Gag-Pol polyproteins after assembly of the VLP. Functionally, reverse transcriptase/ribonuclease H (RT) is a multifunctional enzyme that catalyzes the conversion of the retro-elements RNA genome into dsDNA within the VLP. The enzyme displays a DNA polymerase activity that can copy either DNA or RNA templates, and a ribonuclease H (RNase H) activity that cleaves the RNA strand of RNA-DNA heteroduplexes during plus-strand synthesis and hydrolyzes RNA primers. The conversion leads to a linear dsDNA copy of the retrotransposon that includes long terminal repeats (LTRs) at both ends. Its function is as follows. Integrase (IN) targets the VLP to the nucleus, where a subparticle preintegration complex (PIC) containing at least integrase and the newly synthesized dsDNA copy of the retrotransposon must transit the nuclear membrane. Once in the nucleus, integrase performs the integration of the dsDNA into the host genome. The protein is Transposon Ty1-PR1 Gag-Pol polyprotein (TY1B-PR1) of Saccharomyces cerevisiae (strain ATCC 204508 / S288c) (Baker's yeast).